Consider the following 471-residue polypeptide: MEMEILYNYDTIIIGGGLSGLNTAYDLKKSNFKILVLEARNRFGGRTDSVKVGDGWVDAGGQWLGTNNPNLKQLCKELKLETYKQFYQGKTVFDIYDDGLIKSFDESSPNFDLCEIGLGNINPIIRAIKEVMKNIDFSKCSKESPIMLSLEKLTVSEWLRVCGYGESVKFFNWFCKMSVASSSDDISILFLLKYVNSINGFESLFISDDDCTESDRIIGGSSMVSERIVSYLKDDCKLNCEVTLIDQISHKNSRLIKITTSNNENYYCRNVVSTIPPMLLKNVIFKPDLPIEKQRLKNEMEMGNTIKVIVIYDSVFWRDQGYNGKSQSFVGPIYQSFDNCTNDLSVKSIIGFINGKEEIKYWYSKSLEERRSAVLNQYSKYWGPKALNPIHYIERNWSLDKYSAGCFMGVCKSGDIISQCNNYYTQPHGNIHWAGTETSTQWYGHMEGAITSSKRVVNEILKNSLNSKSKL.

The residue at position 406 (C406) is an S-8alpha-FAD cysteine.

This sequence belongs to the flavin monoamine oxidase family. FAD serves as cofactor.

It carries out the reaction a secondary aliphatic amine + O2 + H2O = a primary amine + an aldehyde + H2O2. The polypeptide is Probable flavin-containing monoamine oxidase B (maoB-1) (Dictyostelium discoideum (Social amoeba)).